A 93-amino-acid chain; its full sequence is Protein NONRESPONDING TO OXYLIPINS 2, mitochondrial (93 aa).

The transit peptide at 1-27 directs the protein to the mitochondrion; the sequence is MASRCRSLSKPAFSAFRSAMNKPSIRP.

Expressed in cotyledons, roots and flowers.

The protein resides in the mitochondrion. Functionally, essential for mitochondrial morphology, functionality and distribution. Contributes to 9-lipoxygenase (9-LOX)-derived oxylipin synthesis, but not to brassinosteroids (BRs) signaling. Required for waving-inducing oxylipin 9-hydroxyoctadecatrienoic acid and derivatives (e.g. 9-HOT, 2-HOE, 13-HOT, 13-HOD, 13-KOD, 12,13-KHOD, 9-HOT, 9-HOD, 9-KOT, 9-KOD and 9,10-KHOE)-mediated root development regulation, including callose deposition, root waving and lateral roots formation. Involved in basal plant defense toward pathogenic bacteria (e.g. Pseudomonas syringae pv tomato), both in compatible (e.g. Pst DC3000) and incompatible (e.g. Pst DC3000 avrRPM1) interactions, as well as against obligate biotrophic pathogenic fungi (e.g. Golovinomyces cichoracearum), probably via the promotion of callose deposition in the cell wall. Confers sensitivity to the herbicide isoxaben, a herbicide inhibiting cellulose synthesis and altering the cell wall. The chain is Protein NONRESPONDING TO OXYLIPINS 2, mitochondrial from Arabidopsis thaliana (Mouse-ear cress).